We begin with the raw amino-acid sequence, 439 residues long: Transcription factor pydF (439 aa).

The span at 1–18 (MGRPQRADKQRRETDGPQ) shows a compositional bias: basic and acidic residues. 3 disordered regions span residues 1–53 (MGRP…GYAR), 143–177 (HVEKATAERPGNDGSSSPSSSLLRTSSSPSQQAVE), and 239–262 (AFRDGQNNGTSRPNTAASQNMQQH). Residues 20 to 35 (SRPSLTQAQKNSTTIR) show a composition bias toward polar residues. A compositionally biased stretch (basic and acidic residues) spans 143–153 (HVEKATAERPG). Residues 157-172 (SSSPSSSLLRTSSSPS) are compositionally biased toward low complexity. Residues 243–260 (GQNNGTSRPNTAASQNMQ) are compositionally biased toward polar residues.

The protein localises to the nucleus. Its function is as follows. Transcription factor; part of the gene cluster that mediates the biosynthesis of pyrrocidines, fungal natural products containing a macrocyclic para-cyclophane connected to a decahydrofluorene ring system that show potent antibiotic activities toward Gram-negative bacteria. This is Transcription factor pydF from Acremonium sp.